Reading from the N-terminus, the 318-residue chain is Methionyl-tRNA formyltransferase (318 aa).

A (6S)-5,6,7,8-tetrahydrofolate-binding site is contributed by 112-115 (SILP).

Belongs to the Fmt family.

It catalyses the reaction L-methionyl-tRNA(fMet) + (6R)-10-formyltetrahydrofolate = N-formyl-L-methionyl-tRNA(fMet) + (6S)-5,6,7,8-tetrahydrofolate + H(+). Its function is as follows. Attaches a formyl group to the free amino group of methionyl-tRNA(fMet). The formyl group appears to play a dual role in the initiator identity of N-formylmethionyl-tRNA by promoting its recognition by IF2 and preventing the misappropriation of this tRNA by the elongation apparatus. The protein is Methionyl-tRNA formyltransferase of Haemophilus influenzae (strain PittGG).